The primary structure comprises 75 residues: Small capsomere-interacting protein (75 aa).

The protein belongs to the herpesviridae small capsomere-interacting protein family. Interacts with the major capsid protein/MCP.

It is found in the virion. The protein resides in the host nucleus. Functionally, participates in the assembly of the infectious particles by decorating the outer surface of the capsid shell and thus forming a layer between the capsid and the tegument. Complexes composed of the capsid protein VP5 and UL48A assemble together in the host cytoplasm and are translocated to the nucleus, where they accumulate and participate in capsid assembly. In terms of biological role, participates in the assembly of the infectious particles by decorating the outer surface of the capsid shell and thus forming a layer between the capsid and the tegument. Complexes composed of the major capsid protein and small capsomere-interacting protein/SCP assemble together in the host cytoplasm and are translocated to the nucleus, where they accumulate and participate in capsid assembly. In Homo sapiens (Human), this protein is Small capsomere-interacting protein.